We begin with the raw amino-acid sequence, 555 residues long: Hydroxylamine reductase (555 aa).

4 residues coordinate [4Fe-4S] cluster: Cys3, Cys6, Cys18, and Cys25. The hybrid [4Fe-2O-2S] cluster site is built by His252, Glu276, Cys320, Cys407, Cys435, Cys460, Glu494, and Lys496. Position 407 is a cysteine persulfide (Cys407).

The protein belongs to the HCP family. Requires [4Fe-4S] cluster as cofactor. Hybrid [4Fe-2O-2S] cluster is required as a cofactor.

The protein resides in the cytoplasm. The catalysed reaction is A + NH4(+) + H2O = hydroxylamine + AH2 + H(+). Its function is as follows. Catalyzes the reduction of hydroxylamine to form NH(3) and H(2)O. This is Hydroxylamine reductase from Burkholderia lata (strain ATCC 17760 / DSM 23089 / LMG 22485 / NCIMB 9086 / R18194 / 383).